The chain runs to 983 residues: Kinesin-like protein KIN-14I (983 aa).

The Calponin-homology (CH) domain maps to 44–166; the sequence is ASRRYEAANW…CVLAIKSYDE (123 aa). Polar residues-rich tracts occupy residues 203 to 214 and 278 to 287; these read SLSRTSSINNEK and ESTSSQNNRS. 2 disordered regions span residues 203-227 and 276-295; these read SLSRTSSINNEKAPSENDSNKLSSP and PRESTSSQNNRSFLKPLGER. The region spanning 399 to 724 is the Kinesin motor domain; the sequence is SIRVYCRVRP…LKFAERVATV (326 aa). 481-488 contributes to the ATP binding site; that stretch reads GQTGSGKT. Residues 731–758 adopt a coiled-coil conformation; sequence VNNDTSDVKELKEQIATLKAALARKEAE. Disordered regions lie at residues 802–824 and 921–983; these read TVNSPPWPPVASPGQAYREDDRS and TRSN…NARH. Residues 939–951 are compositionally biased toward polar residues; sequence SPQSRNNSNNTVS.

The protein belongs to the TRAFAC class myosin-kinesin ATPase superfamily. Kinesin family. KIN-14 subfamily.

This is Kinesin-like protein KIN-14I from Arabidopsis thaliana (Mouse-ear cress).